Consider the following 701-residue polypeptide: Glycine--tRNA ligase beta subunit (701 aa).

It belongs to the class-II aminoacyl-tRNA synthetase family. Tetramer of two alpha and two beta subunits.

The protein localises to the cytoplasm. It catalyses the reaction tRNA(Gly) + glycine + ATP = glycyl-tRNA(Gly) + AMP + diphosphate. This chain is Glycine--tRNA ligase beta subunit, found in Anaeromyxobacter sp. (strain K).